A 270-amino-acid chain; its full sequence is 3-phenylpropionate-dihydrodiol/cinnamic acid-dihydrodiol dehydrogenase (270 aa).

An NAD(+)-binding site is contributed by 10 to 34 (FITGGGSGLGLALVERFIEEGAQVA). A substrate-binding site is contributed by S143. Y156 functions as the Proton acceptor in the catalytic mechanism.

The protein belongs to the short-chain dehydrogenases/reductases (SDR) family.

The enzyme catalyses 3-(cis-5,6-dihydroxycyclohexa-1,3-dien-1-yl)propanoate + NAD(+) = 3-(2,3-dihydroxyphenyl)propanoate + NADH + H(+). The catalysed reaction is (2E)-3-(cis-5,6-dihydroxycyclohexa-1,3-dien-1-yl)prop-2-enoate + NAD(+) = (2E)-3-(2,3-dihydroxyphenyl)prop-2-enoate + NADH + H(+). It functions in the pathway aromatic compound metabolism; 3-phenylpropanoate degradation. Its function is as follows. Converts 3-phenylpropionate-dihydrodiol (PP-dihydrodiol) and cinnamic acid-dihydrodiol (CI-dihydrodiol) into 3-(2,3-dihydroxylphenyl)propanoic acid (DHPP) and 2,3-dihydroxicinnamic acid (DHCI), respectively. This chain is 3-phenylpropionate-dihydrodiol/cinnamic acid-dihydrodiol dehydrogenase, found in Escherichia coli O17:K52:H18 (strain UMN026 / ExPEC).